Consider the following 75-residue polypeptide: MNPSEMQRKGPPRRWCLQVYPTAPKRQRPSRTGHDDDGGFVEKKRGKCGEKQERSDCYCVCVERSRHRRLHFVMC.

The segment at 22-43 (TAPKRQRPSRTGHDDDGGFVEK) is disordered. The span at 32-43 (TGHDDDGGFVEK) shows a compositional bias: basic and acidic residues.

In terms of tissue distribution, transcript detectable in many tumor cell lines and tumor tissues.

Its subcellular location is the nucleus. Functionally, may possess a function in tumorigenesis. This is Endogenous retrovirus group K member 24 Np9 protein (ERVK-24) from Homo sapiens (Human).